Here is a 165-residue protein sequence, read N- to C-terminus: MVGRDENELQDVQLLGSQGTTYDFNYTPEVLEVFDNKHVSRDYFVKFNCPEFTTLCPKTNQPDFGTIYISYIPDIKMVESKSLKLYLFSFRNHGDFHEDCINIIMNDLIDLMNPRYIEVRGKFTPRGGISIDPYCNYGRPGTKFEQMADQRLIQHDMYPEKIDNR.

The active-site Thioimide intermediate is the C56. The active-site Proton donor is the D63. Substrate-binding positions include 78-80 (VES) and 97-98 (HE).

It belongs to the GTP cyclohydrolase I family. QueF type 1 subfamily.

Its subcellular location is the cytoplasm. The catalysed reaction is 7-aminomethyl-7-carbaguanine + 2 NADP(+) = 7-cyano-7-deazaguanine + 2 NADPH + 3 H(+). The protein operates within tRNA modification; tRNA-queuosine biosynthesis. Functionally, catalyzes the NADPH-dependent reduction of 7-cyano-7-deazaguanine (preQ0) to 7-aminomethyl-7-deazaguanine (preQ1). In Oceanobacillus iheyensis (strain DSM 14371 / CIP 107618 / JCM 11309 / KCTC 3954 / HTE831), this protein is NADPH-dependent 7-cyano-7-deazaguanine reductase.